The following is a 646-amino-acid chain: Threonine--tRNA ligase (646 aa).

Residues methionine 1–threonine 63 enclose the TGS domain. The tract at residues aspartate 247–proline 544 is catalytic. 3 residues coordinate Zn(2+): cysteine 344, histidine 395, and histidine 521.

The protein belongs to the class-II aminoacyl-tRNA synthetase family. As to quaternary structure, homodimer. The cofactor is Zn(2+).

Its subcellular location is the cytoplasm. The catalysed reaction is tRNA(Thr) + L-threonine + ATP = L-threonyl-tRNA(Thr) + AMP + diphosphate + H(+). Catalyzes the attachment of threonine to tRNA(Thr) in a two-step reaction: L-threonine is first activated by ATP to form Thr-AMP and then transferred to the acceptor end of tRNA(Thr). Also edits incorrectly charged L-seryl-tRNA(Thr). This Cereibacter sphaeroides (strain ATCC 17023 / DSM 158 / JCM 6121 / CCUG 31486 / LMG 2827 / NBRC 12203 / NCIMB 8253 / ATH 2.4.1.) (Rhodobacter sphaeroides) protein is Threonine--tRNA ligase.